Reading from the N-terminus, the 432-residue chain is Bifunctional protein GlmU (432 aa).

The tract at residues 1 to 224 (MSEISVIILA…EENFMGINDK (224 aa)) is pyrophosphorylase. UDP-N-acetyl-alpha-D-glucosamine-binding positions include 9–12 (LAAG), Lys23, and 82–83 (GT). Asp103 is a Mg(2+) binding site. The UDP-N-acetyl-alpha-D-glucosamine site is built by Gly136, Glu150, Asn165, and Asn222. Asn222 serves as a coordination point for Mg(2+). The linker stretch occupies residues 225–245 (FALSKAETIIQNEIKENLMKN). Positions 246-432 (GVLMRLPESI…FFAKFFKEIK (187 aa)) are N-acetyltransferase. The UDP-N-acetyl-alpha-D-glucosamine site is built by Arg309 and Lys326. His337 acts as the Proton acceptor in catalysis. UDP-N-acetyl-alpha-D-glucosamine is bound by residues Tyr340 and Asn351. Acetyl-CoA contacts are provided by residues 360 to 361 (NY), Ser379, Ala397, and Arg414.

This sequence in the N-terminal section; belongs to the N-acetylglucosamine-1-phosphate uridyltransferase family. In the C-terminal section; belongs to the transferase hexapeptide repeat family. Homotrimer. It depends on Mg(2+) as a cofactor.

It localises to the cytoplasm. It catalyses the reaction alpha-D-glucosamine 1-phosphate + acetyl-CoA = N-acetyl-alpha-D-glucosamine 1-phosphate + CoA + H(+). The enzyme catalyses N-acetyl-alpha-D-glucosamine 1-phosphate + UTP + H(+) = UDP-N-acetyl-alpha-D-glucosamine + diphosphate. It participates in nucleotide-sugar biosynthesis; UDP-N-acetyl-alpha-D-glucosamine biosynthesis; N-acetyl-alpha-D-glucosamine 1-phosphate from alpha-D-glucosamine 6-phosphate (route II): step 2/2. It functions in the pathway nucleotide-sugar biosynthesis; UDP-N-acetyl-alpha-D-glucosamine biosynthesis; UDP-N-acetyl-alpha-D-glucosamine from N-acetyl-alpha-D-glucosamine 1-phosphate: step 1/1. The protein operates within bacterial outer membrane biogenesis; LPS lipid A biosynthesis. Functionally, catalyzes the last two sequential reactions in the de novo biosynthetic pathway for UDP-N-acetylglucosamine (UDP-GlcNAc). The C-terminal domain catalyzes the transfer of acetyl group from acetyl coenzyme A to glucosamine-1-phosphate (GlcN-1-P) to produce N-acetylglucosamine-1-phosphate (GlcNAc-1-P), which is converted into UDP-GlcNAc by the transfer of uridine 5-monophosphate (from uridine 5-triphosphate), a reaction catalyzed by the N-terminal domain. This is Bifunctional protein GlmU from Campylobacter hominis (strain ATCC BAA-381 / DSM 21671 / CCUG 45161 / LMG 19568 / NCTC 13146 / CH001A).